We begin with the raw amino-acid sequence, 265 residues long: Triosephosphate isomerase (265 aa).

A substrate-binding site is contributed by 8–10 (NWK). The active-site Electrophile is the His-103. Glu-182 functions as the Proton acceptor in the catalytic mechanism. Substrate is bound by residues Gly-188, Ser-226, and 247–248 (GG).

This sequence belongs to the triosephosphate isomerase family. As to quaternary structure, homodimer.

It localises to the cytoplasm. The enzyme catalyses D-glyceraldehyde 3-phosphate = dihydroxyacetone phosphate. The protein operates within carbohydrate biosynthesis; gluconeogenesis. Its pathway is carbohydrate degradation; glycolysis; D-glyceraldehyde 3-phosphate from glycerone phosphate: step 1/1. Functionally, involved in the gluconeogenesis. Catalyzes stereospecifically the conversion of dihydroxyacetone phosphate (DHAP) to D-glyceraldehyde-3-phosphate (G3P). This Psychrobacter sp. (strain PRwf-1) protein is Triosephosphate isomerase.